A 272-amino-acid chain; its full sequence is DNA repair protein RecO (272 aa).

This sequence belongs to the RecO family.

Involved in DNA repair and RecF pathway recombination. The polypeptide is DNA repair protein RecO (Latilactobacillus sakei subsp. sakei (strain 23K) (Lactobacillus sakei subsp. sakei)).